Reading from the N-terminus, the 102-residue chain is Cysteine-rich venom protein VAR9 (102 aa).

The first 19 residues, 1-19 (MILLKLYLTLAAILCQSRG), serve as a signal peptide directing secretion. An SCP domain is found at 41–80 (NKHNDLRRTVDPPAKNMLKMSWDNIIAESAKRAALRCNYK).

The protein belongs to the CRISP family. In terms of processing, contains 8 disulfide bonds. Expressed by the venom gland.

The protein localises to the secreted. In terms of biological role, blocks ryanodine receptors, and potassium channels. The chain is Cysteine-rich venom protein VAR9 from Varanus varius (Lace monitor lizard).